A 572-amino-acid chain; its full sequence is NADH-ubiquinone oxidoreductase chain 5 (572 aa).

16 consecutive transmembrane segments (helical) span residues 4–24, 44–64, 86–106, 107–127, 147–167, 170–190, 217–237, 239–259, 268–288, 294–314, 337–357, 372–394, 422–442, 457–477, 490–510, and 552–572; these read ISFV…LYFL, IVMT…VLMI, IMLV…PNLI, SILL…IYFQ, VALL…YIFY, IMQN…AAMT, SSTL…ILST, WLGQ…GLGA, IIAL…SMGF, FHLL…GAII, SACF…AGFY, NMFS…FRLV, MGLL…IFPF, LFVC…NLFF, FLGS…FYPL, and LKIY…LLFL.

The protein belongs to the complex I subunit 5 family.

It localises to the mitochondrion inner membrane. It carries out the reaction a ubiquinone + NADH + 5 H(+)(in) = a ubiquinol + NAD(+) + 4 H(+)(out). Its function is as follows. Core subunit of the mitochondrial membrane respiratory chain NADH dehydrogenase (Complex I) that is believed to belong to the minimal assembly required for catalysis. Complex I functions in the transfer of electrons from NADH to the respiratory chain. The immediate electron acceptor for the enzyme is believed to be ubiquinone. In Drosophila melanogaster (Fruit fly), this protein is NADH-ubiquinone oxidoreductase chain 5 (mt:ND5).